The primary structure comprises 236 residues: Segregation and condensation protein A (236 aa).

This sequence belongs to the ScpA family. In terms of assembly, component of a cohesin-like complex composed of ScpA, ScpB and the Smc homodimer, in which ScpA and ScpB bind to the head domain of Smc. The presence of the three proteins is required for the association of the complex with DNA.

It is found in the cytoplasm. In terms of biological role, participates in chromosomal partition during cell division. May act via the formation of a condensin-like complex containing Smc and ScpB that pull DNA away from mid-cell into both cell halves. The polypeptide is Segregation and condensation protein A (Streptococcus sanguinis (strain SK36)).